Consider the following 153-residue polypeptide: Interleukin-17A (153 aa).

The N-terminal stretch at 1–23 is a signal peptide; it reads MASMRTSSMSLLLLLSLVALVKA. N-linked (GlcNAc...) asparagine glycosylation is present at asparagine 53. Residues 56–76 are disordered; it reads TNSRRPTDYHKRSTSPWTLHR. 2 disulfides stabilise this stretch: cysteine 92–cysteine 142 and cysteine 97–cysteine 144.

It belongs to the IL-17 family. As to quaternary structure, homodimer. Forms complexes with IL17RA and IL17RC receptors with 2:1 binding stoichiometry: two receptor chains for one interleukin molecule. IL17A homodimer preferentially drives the formation of IL17RA-IL17RC heterodimeric receptor complex. IL17A homodimer adopts an asymmetrical ternary structure with one IL17RA molecule, allowing for high affinity interactions of one IL17A monomer with one IL17RA molecule (via D1 and D2 domains), while disfavoring binding of a second IL17RA molecule on the other IL17A monomer. Heterodimer with IL17F. IL17A-IL17F forms complexes with IL17RA-IL17RC, but with lower affinity when compared to IL17A homodimer. IL17RA and IL17RC chains cannot distinguish between IL17A and IL17F molecules, potentially enabling the formation of topologically distinct complexes.

It is found in the secreted. Its function is as follows. Effector cytokine of innate and adaptive immune system involved in antimicrobial host defense and maintenance of tissue integrity. Signals via IL17RA-IL17RC heterodimeric receptor complex, triggering homotypic interaction of IL17RA and IL17RC chains with TRAF3IP2 adapter. This leads to downstream TRAF6-mediated activation of NF-kappa-B and MAPkinase pathways ultimately resulting in transcriptional activation of cytokines, chemokines, antimicrobial peptides and matrix metalloproteinases, with potential strong immune inflammation. Plays an important role in connecting T cell-mediated adaptive immunity and acute inflammatory response to destroy extracellular bacteria and fungi. As a signature effector cytokine of T-helper 17 cells (Th17), primarily induces neutrophil activation and recruitment at infection and inflammatory sites. In airway epithelium, mediates neutrophil chemotaxis via induction of CXCL1 and CXCL5 chemokines. In secondary lymphoid organs, contributes to germinal center formation by regulating the chemotactic response of B cells to CXCL12 and CXCL13, enhancing retention of B cells within the germinal centers, B cell somatic hypermutation rate and selection toward plasma cells. Effector cytokine of a subset of gamma-delta T cells that functions as part of an inflammatory circuit downstream IL1B, TLR2 and IL23A-IL12B to promote neutrophil recruitment for efficient bacterial clearance. Effector cytokine of innate immune cells including invariant natural killer cell (iNKT) and group 3 innate lymphoid cells that mediate initial neutrophilic inflammation. Involved in the maintenance of the integrity of epithelial barriers during homeostasis and pathogen infection. Upon acute injury, has a direct role in epithelial barrier formation by regulating OCLN localization and tight junction biogenesis. As part of the mucosal immune response induced by commensal bacteria, enhances host's ability to resist pathogenic bacterial and fungal infections by promoting neutrophil recruitment and antimicrobial peptides release. In synergy with IL17F, mediates the production of antimicrobial beta-defensins DEFB1, DEFB103A, and DEFB104A by mucosal epithelial cells, limiting the entry of microbes through the epithelial barriers. Involved in antiviral host defense through various mechanisms. Enhances immunity against West Nile virus by promoting T cell cytotoxicity. May play a beneficial role in influenza A virus (H5N1) infection by enhancing B cell recruitment and immune response in the lung. Contributes to influenza A virus (H1N1) clearance by driving the differentiation of B-1a B cells, providing for production of virus-specific IgM antibodies at first line of host defense. The polypeptide is Interleukin-17A (IL17A) (Bos taurus (Bovine)).